Consider the following 71-residue polypeptide: Sec-independent protein translocase protein TatA (71 aa).

A helical membrane pass occupies residues Met-1 to Gly-21.

Belongs to the TatA/E family. The Tat system comprises two distinct complexes: a TatABC complex, containing multiple copies of TatA, TatB and TatC subunits, and a separate TatA complex, containing only TatA subunits. Substrates initially bind to the TatABC complex, which probably triggers association of the separate TatA complex to form the active translocon.

The protein resides in the cell inner membrane. In terms of biological role, part of the twin-arginine translocation (Tat) system that transports large folded proteins containing a characteristic twin-arginine motif in their signal peptide across membranes. TatA could form the protein-conducting channel of the Tat system. The protein is Sec-independent protein translocase protein TatA of Dichelobacter nodosus (strain VCS1703A).